The chain runs to 346 residues: Putative D-threonate 4-phosphate dehydrogenase (346 aa).

The substrate site is built by H141 and T142. The a divalent metal cation site is built by H171, H215, and H270. The substrate site is built by K278 and R296.

This sequence belongs to the PdxA family. PdxA2 subfamily. Homodimer. Requires a divalent metal cation as cofactor.

It carries out the reaction 4-O-phospho-D-threonate + NAD(+) = dihydroxyacetone phosphate + CO2 + NADH. Its function is as follows. Catalyzes the NAD-dependent oxidation and subsequent decarboxylation of D-threonate 4-phosphate to produce dihydroxyacetone phosphate (DHAP). The chain is Putative D-threonate 4-phosphate dehydrogenase from Cutibacterium acnes (strain DSM 16379 / KPA171202) (Propionibacterium acnes).